Consider the following 620-residue polypeptide: Eukaryotic translation initiation factor 2-alpha kinase 1 (620 aa).

Residues 1-38 (MLGGGSVDGERDTDDDAAGAVAAPPAIDFPAEVSDPKY) are disordered. The segment covering 18–28 (AGAVAAPPAID) has biased composition (low complexity). The short motif at 85–104 (LHSKQVFKLLCQTFIKMGLL) is the SIFI-degron element. One can recognise a Protein kinase domain in the interval 167–581 (FEELAILGKG…ALQLLQSELF (415 aa)). Residues 173–181 (LGKGGYGRV) and lysine 196 contribute to the ATP site. Threonine 283 is modified (phosphothreonine). The HRM 1 repeat unit spans residues 408–413 (ACPYVM). Residue aspartate 440 is the Proton acceptor of the active site. Phosphothreonine; by autocatalysis is present on residues threonine 484 and threonine 486. Threonine 491 bears the Phosphothreonine mark. An HRM 2 repeat occupies 550–555 (RCPVQA).

Belongs to the protein kinase superfamily. Ser/Thr protein kinase family. GCN2 subfamily. Synthesized in an inactive form that binds to the N-terminal domain of CDC37. Has to be associated with a multiprotein complex containing Hsp90, CDC37 and PPP5C for maturation and activation by autophosphorylation. The phosphatase PPP5C modulates this activation. Homodimer; homodimerizes in presence of heme, forming a disulfide-linked inactive homodimer. Interacts with DELE1; binds both to full-length DELE1 and processed form of DELE1 (S-DELE1) in response to stress, leading to activate its protein kinase activity and trigger the integrated stress response (ISR). Activated by autophosphorylation; phosphorylated predominantly on serine and threonine residues, but also on tyrosine residues. Autophosphorylation at Thr-486 is required for kinase activation. The active autophosphorylated form apparently is largely refractory to cellular heme fluctuations. Post-translationally, ubiquitinated and degraded by the SIFI complex once the mitochondrial stress has been resolved, thereby providing stress response silencing. Within the SIFI complex, UBR4 initiates ubiquitin chain that are further elongated or branched by KCMF1.

The protein localises to the cytoplasm. The enzyme catalyses L-seryl-[protein] + ATP = O-phospho-L-seryl-[protein] + ADP + H(+). The catalysed reaction is L-threonyl-[protein] + ATP = O-phospho-L-threonyl-[protein] + ADP + H(+). In normal conditions, the protein kinase activity is inhibited; inhibition is relieved by various stress conditions. Inhibited by heme: in presence of heme, forms a disulfide-linked inactive homodimer. Heme depletion relieves inhibition and stimulates kinase activity by autophosphorylation. Inhibited by the heme metabolites biliverdin and bilirubin. Induced by oxidative stress generated by arsenite treatment. Binding of nitric oxide (NO) to the heme iron in the N-terminal heme-binding domain activates the kinase activity, while binding of carbon monoxide (CO) suppresses kinase activity. Protein kinase activity is also activated upon binding to DELE1 in response to various stress, triggering the integrated stress response (ISR): activated by full-length DELE1 in response to iron deficiency, while it is activated by the processed form of DELE1 (S-DELE1) in response to mitochondrial stress. Metabolic-stress sensing protein kinase that phosphorylates the alpha subunit of eukaryotic translation initiation factor 2 (EIF2S1/eIF-2-alpha) in response to various stress conditions. Key activator of the integrated stress response (ISR) required for adaptation to various stress, such as heme deficiency, oxidative stress, osmotic shock, mitochondrial dysfunction and heat shock. EIF2S1/eIF-2-alpha phosphorylation in response to stress converts EIF2S1/eIF-2-alpha in a global protein synthesis inhibitor, leading to a global attenuation of cap-dependent translation, while concomitantly initiating the preferential translation of ISR-specific mRNAs, such as the transcriptional activator ATF4, and hence allowing ATF4-mediated reprogramming. Acts as a key sensor of heme-deficiency: in normal conditions, binds hemin via a cysteine thiolate and histidine nitrogenous coordination, leading to inhibit the protein kinase activity. This binding occurs with moderate affinity, allowing it to sense the heme concentration within the cell: heme depletion relieves inhibition and stimulates kinase activity, activating the ISR. Thanks to this unique heme-sensing capacity, plays a crucial role to shut off protein synthesis during acute heme-deficient conditions. In red blood cells (RBCs), controls hemoglobin synthesis ensuring a coordinated regulation of the synthesis of its heme and globin moieties. It thereby plays an essential protective role for RBC survival in anemias of iron deficiency. Iron deficiency also triggers activation by full-length DELE1. Also activates the ISR in response to mitochondrial dysfunction: HRI/EIF2AK1 protein kinase activity is activated upon binding to the processed form of DELE1 (S-DELE1), thereby promoting the ATF4-mediated reprogramming. Also acts as an activator of mitophagy in response to mitochondrial damage: catalyzes phosphorylation of eIF-2-alpha (EIF2S1) following activation by S-DELE1, thereby promoting mitochondrial localization of EIF2S1, triggering PRKN-independent mitophagy. The polypeptide is Eukaryotic translation initiation factor 2-alpha kinase 1 (Rattus norvegicus (Rat)).